Here is a 148-residue protein sequence, read N- to C-terminus: D-aminoacyl-tRNA deacylase (148 aa).

A Gly-cisPro motif, important for rejection of L-amino acids motif is present at residues 137–138; the sequence is GP.

It belongs to the DTD family. As to quaternary structure, homodimer.

It localises to the cytoplasm. The catalysed reaction is glycyl-tRNA(Ala) + H2O = tRNA(Ala) + glycine + H(+). The enzyme catalyses a D-aminoacyl-tRNA + H2O = a tRNA + a D-alpha-amino acid + H(+). In terms of biological role, an aminoacyl-tRNA editing enzyme that deacylates mischarged D-aminoacyl-tRNAs. Also deacylates mischarged glycyl-tRNA(Ala), protecting cells against glycine mischarging by AlaRS. Acts via tRNA-based rather than protein-based catalysis; rejects L-amino acids rather than detecting D-amino acids in the active site. By recycling D-aminoacyl-tRNA to D-amino acids and free tRNA molecules, this enzyme counteracts the toxicity associated with the formation of D-aminoacyl-tRNA entities in vivo and helps enforce protein L-homochirality. This Lactiplantibacillus plantarum (strain ATCC BAA-793 / NCIMB 8826 / WCFS1) (Lactobacillus plantarum) protein is D-aminoacyl-tRNA deacylase.